The chain runs to 29 residues: GKPTCGETCFKGKCYTPGCTCSYPLCKKD.

Positions 1-29 (GKPTCGETCFKGKCYTPGCTCSYPLCKKD) form a cross-link, cyclopeptide (Gly-Asp). 3 disulfides stabilise this stretch: cysteine 5–cysteine 19, cysteine 9–cysteine 21, and cysteine 14–cysteine 26.

In terms of processing, this is a cyclic peptide. Contains 3 disulfide bonds.

Functionally, probably participates in a plant defense mechanism (Potential). Binds to and induces leakage in phospholipd membranes, particularly ones containing 1-palmitoyl-2-oleophosphatidylethanolamine (POPE). In vitro, displays cytotoxicity against cultured cells but no hemolytic activity towards fresh erythrocytes. Not active against Gram-negative bacterium E.coli ATCC 25922 or Gram-positive bacterium S.aureus ATCC 25923 up to a concentration of 64 uM. The sequence is that of Cyclotide mela-2 from Melicytus latifolius (Norfolk Island mahoe).